Consider the following 190-residue polypeptide: C-type lectin domain family 5 member A (190 aa).

Residues 1 to 4 (MNWH) are Cytoplasmic-facing. The helical; Signal-anchor for type II membrane protein transmembrane segment at 5–25 (MIISGLIVVVIKVVGMTFFLL) threads the bilayer. At 26 to 190 (YFPQVFGKSN…YRWICEMNAK (165 aa)) the chain is on the extracellular side. N-linked (GlcNAc...) asparagine glycosylation is found at Asn-51, Asn-146, and Asn-153. The C-type lectin domain maps to 80 to 186 (HQGKCFFFSF…CEVSYRWICE (107 aa)). Cystine bridges form between Cys-101-Cys-185 and Cys-163-Cys-177.

As to quaternary structure, monomer. Homodimer. The majority of CLEC5A is expressed as a monomeric form on macrophages. Interacts with TYROBP/DAP12. The interaction with TYROBP is required for CLEC5 cell surface expression. Interacts with HCST/DAP10. Forms a CLEC5A/TYROBP/HCST trimolecular complex depending almost solely on TYROBP. In terms of processing, N-glycosylated. Contains sialic acid residues. Strong expression in bone marrow cells and thioglycollate-induced neutrophils (at protein level). Expressed on granulocytes and monocytes from bone marrow and peripheral blood. Expressed in macrophage cell line J-774, but not in T-cell lines, B-cell lines, or mast cell lines.

It is found in the cell membrane. In terms of biological role, functions as a positive regulator of osteoclastogenesis. Cell surface receptor that signals via TYROBP. Regulates inflammatory responses. In Mus musculus (Mouse), this protein is C-type lectin domain family 5 member A (Clec5a).